Here is a 235-residue protein sequence, read N- to C-terminus: Small ribosomal subunit protein uS2 (235 aa).

It belongs to the universal ribosomal protein uS2 family.

The sequence is that of Small ribosomal subunit protein uS2 from Geobacillus thermodenitrificans (strain NG80-2).